Consider the following 224-residue polypeptide: LexA repressor (224 aa).

The segment at residues 31–51 (RAEIANTLGFKSANAAEEHLQ) is a DNA-binding region (H-T-H motif). Active-site for autocatalytic cleavage activity residues include S142 and K179.

It belongs to the peptidase S24 family. In terms of assembly, homodimer.

It catalyses the reaction Hydrolysis of Ala-|-Gly bond in repressor LexA.. In terms of biological role, represses a number of genes involved in the response to DNA damage (SOS response), including recA and lexA. In the presence of single-stranded DNA, RecA interacts with LexA causing an autocatalytic cleavage which disrupts the DNA-binding part of LexA, leading to derepression of the SOS regulon and eventually DNA repair. In Delftia acidovorans (strain DSM 14801 / SPH-1), this protein is LexA repressor.